Consider the following 344-residue polypeptide: N-acetyl-gamma-glutamyl-phosphate reductase (344 aa).

Cysteine 150 is an active-site residue.

This sequence belongs to the NAGSA dehydrogenase family. Type 1 subfamily.

Its subcellular location is the cytoplasm. It catalyses the reaction N-acetyl-L-glutamate 5-semialdehyde + phosphate + NADP(+) = N-acetyl-L-glutamyl 5-phosphate + NADPH + H(+). The protein operates within amino-acid biosynthesis; L-arginine biosynthesis; N(2)-acetyl-L-ornithine from L-glutamate: step 3/4. Catalyzes the NADPH-dependent reduction of N-acetyl-5-glutamyl phosphate to yield N-acetyl-L-glutamate 5-semialdehyde. In Azotobacter vinelandii (strain DJ / ATCC BAA-1303), this protein is N-acetyl-gamma-glutamyl-phosphate reductase.